The following is a 182-amino-acid chain: Large ribosomal subunit protein uL22 (182 aa).

The segment at 159-182 (AAAKPKATAKKATGEKSKAKTKAN) is disordered.

The protein belongs to the universal ribosomal protein uL22 family. As to quaternary structure, part of the 50S ribosomal subunit.

This protein binds specifically to 23S rRNA; its binding is stimulated by other ribosomal proteins, e.g. L4, L17, and L20. It is important during the early stages of 50S assembly. It makes multiple contacts with different domains of the 23S rRNA in the assembled 50S subunit and ribosome. Its function is as follows. The globular domain of the protein is located near the polypeptide exit tunnel on the outside of the subunit, while an extended beta-hairpin is found that lines the wall of the exit tunnel in the center of the 70S ribosome. The polypeptide is Large ribosomal subunit protein uL22 (Cytophaga hutchinsonii (strain ATCC 33406 / DSM 1761 / CIP 103989 / NBRC 15051 / NCIMB 9469 / D465)).